Reading from the N-terminus, the 219-residue chain is Large ribosomal subunit protein bL31m (219 aa).

Composition is skewed to basic and acidic residues over residues 169 to 181 (KKEEEEAAKKAAE) and 210 to 219 (KETRHYGKKK). Disordered regions lie at residues 169-188 (KKEEEEAAKKAAEAEEADPF) and 200-219 (TENMNPGLNFKETRHYGKKK).

This sequence belongs to the bacterial ribosomal protein bL31 family. Highly divergent. As to quaternary structure, component of the mitochondrial large ribosomal subunit (mt-LSU). Mature N.crassa 74S mitochondrial ribosomes consist of a small (37S) and a large (54S) subunit. The 37S small subunit contains a 16S ribosomal RNA (16S mt-rRNA) and 32 different proteins. The 54S large subunit contains a 23S rRNA (23S mt-rRNA) and 42 different proteins. bL31m bridges the mt-LSU central protuberance and the mt-SSU head.

It localises to the mitochondrion. Component of the mitochondrial ribosome (mitoribosome), a dedicated translation machinery responsible for the synthesis of mitochondrial genome-encoded proteins, including at least some of the essential transmembrane subunits of the mitochondrial respiratory chain. The mitoribosomes are attached to the mitochondrial inner membrane and translation products are cotranslationally integrated into the membrane. This is Large ribosomal subunit protein bL31m (mrpl36) from Neurospora crassa (strain ATCC 24698 / 74-OR23-1A / CBS 708.71 / DSM 1257 / FGSC 987).